The primary structure comprises 332 residues: Adenosine deaminase (332 aa).

Residues H12 and H14 each coordinate Zn(2+). Substrate contacts are provided by H14, D16, and G169. H196 provides a ligand contact to Zn(2+). The active-site Proton donor is E199. Zn(2+) is bound at residue D277.

Belongs to the metallo-dependent hydrolases superfamily. Adenosine and AMP deaminases family. Adenosine deaminase subfamily. Requires Zn(2+) as cofactor.

The catalysed reaction is adenosine + H2O + H(+) = inosine + NH4(+). It catalyses the reaction 2'-deoxyadenosine + H2O + H(+) = 2'-deoxyinosine + NH4(+). In terms of biological role, catalyzes the hydrolytic deamination of adenosine and 2-deoxyadenosine. This chain is Adenosine deaminase, found in Vibrio atlanticus (strain LGP32) (Vibrio splendidus (strain Mel32)).